The chain runs to 438 residues: Glycogen synthase (438 aa).

Residue K16 coordinates ADP-alpha-D-glucose.

This sequence belongs to the glycosyltransferase 1 family. Bacterial/plant glycogen synthase subfamily.

The catalysed reaction is [(1-&gt;4)-alpha-D-glucosyl](n) + ADP-alpha-D-glucose = [(1-&gt;4)-alpha-D-glucosyl](n+1) + ADP + H(+). It participates in glycan biosynthesis; glycogen biosynthesis. In terms of biological role, synthesizes alpha-1,4-glucan chains using ADP-glucose. The sequence is that of Glycogen synthase from Thermus caldophilus.